Consider the following 688-residue polypeptide: Elongation factor G (688 aa).

One can recognise a tr-type G domain in the interval 8–282 (EKFRNFGIMA…GVVDYLPSPL (275 aa)). GTP contacts are provided by residues 17 to 24 (AHIDAGKT), 81 to 85 (DTPGH), and 135 to 138 (NKMD).

Belongs to the TRAFAC class translation factor GTPase superfamily. Classic translation factor GTPase family. EF-G/EF-2 subfamily.

The protein resides in the cytoplasm. Its function is as follows. Catalyzes the GTP-dependent ribosomal translocation step during translation elongation. During this step, the ribosome changes from the pre-translocational (PRE) to the post-translocational (POST) state as the newly formed A-site-bound peptidyl-tRNA and P-site-bound deacylated tRNA move to the P and E sites, respectively. Catalyzes the coordinated movement of the two tRNA molecules, the mRNA and conformational changes in the ribosome. This is Elongation factor G from Clostridium perfringens (strain ATCC 13124 / DSM 756 / JCM 1290 / NCIMB 6125 / NCTC 8237 / Type A).